The chain runs to 885 residues: Envelope glycoprotein B (885 aa).

Residues 1–34 (MRPRGTPPSFLPLPVLLALAVIAAAGRAAPAAAA) form the signal peptide. The span at 29–46 (APAAAAAPTADPAATPAL) shows a compositional bias: low complexity. Positions 29 to 74 (APAAAAAPTADPAATPALPEDEEVPDEDGEGVATPAPAANASVEAG) are disordered. Over 35–759 (APTADPAATP…SGVSSFLSNP (725 aa)) the chain is Virion surface. Residues 47–58 (PEDEEVPDEDGE) are compositionally biased toward acidic residues. Residues N68 and N122 are each glycosylated (N-linked (GlcNAc...) asparagine; by host). Cystine bridges form between C97–C558, C114–C514, C188–C252, C345–C393, and C581–C618. Involved in fusion and/or binding to host membrane stretches follow at residues 154 to 160 (VWFGHRY) and 239 to 246 (RVEAFHRY). N-linked (GlcNAc...) asparagine; by host glycosylation is found at N379 and N411. Residues 455–478 (RRPAGGDPGEAATPGPSVDPPSVE) are disordered. N659 carries an N-linked (GlcNAc...) asparagine; by host glycan. 2 hydrophobic membrane proximal region regions span residues 704–757 (IDTV…SFLS) and 716–756 (LFAG…SSFL). A helical transmembrane segment spans residues 760 to 780 (FGALAVGLLVLAGLAAAFFAF). The Intravirion segment spans residues 781 to 885 (RYVMRLQRNP…PLRDTDEEEL (105 aa)). The Golgi targeting signature appears at 834–837 (YMAL). Residues 866–885 (MRKRARPRYSPLRDTDEEEL) are disordered. Residues 874-877 (YSPL) carry the Internalization motif motif.

Belongs to the herpesviridae glycoprotein B family. In terms of assembly, homotrimer; disulfide-linked. Binds to heparan sulfate proteoglycans. Interacts with gH/gL heterodimer.

It is found in the virion membrane. The protein resides in the host cell membrane. The protein localises to the host endosome membrane. Its subcellular location is the host Golgi apparatus membrane. In terms of biological role, envelope glycoprotein that forms spikes at the surface of virion envelope. Essential for the initial attachment to heparan sulfate moieties of the host cell surface proteoglycans. Involved in fusion of viral and cellular membranes leading to virus entry into the host cell. Following initial binding to its host receptors, membrane fusion is mediated by the fusion machinery composed at least of gB and the heterodimer gH/gL. May be involved in the fusion between the virion envelope and the outer nuclear membrane during virion egress. The polypeptide is Envelope glycoprotein B (Herpes simplex virus type 2 (strain SA8) (Simian agent 8)).